The chain runs to 521 residues: 2-isopropylmalate synthase (521 aa).

A Pyruvate carboxyltransferase domain is found at 12–274 (VIIFDTTLRD…WNKIDTTMLT (263 aa)). Residues aspartate 21, histidine 209, histidine 211, and asparagine 245 each coordinate Mn(2+). The tract at residues 398 to 521 (KLVSLTVIAG…DMAAPAAAAS (124 aa)) is regulatory domain.

Belongs to the alpha-IPM synthase/homocitrate synthase family. LeuA type 1 subfamily. As to quaternary structure, homodimer. Requires Mn(2+) as cofactor.

It localises to the cytoplasm. It carries out the reaction 3-methyl-2-oxobutanoate + acetyl-CoA + H2O = (2S)-2-isopropylmalate + CoA + H(+). It participates in amino-acid biosynthesis; L-leucine biosynthesis; L-leucine from 3-methyl-2-oxobutanoate: step 1/4. Catalyzes the condensation of the acetyl group of acetyl-CoA with 3-methyl-2-oxobutanoate (2-ketoisovalerate) to form 3-carboxy-3-hydroxy-4-methylpentanoate (2-isopropylmalate). This chain is 2-isopropylmalate synthase, found in Rhodopseudomonas palustris (strain BisA53).